A 312-amino-acid polypeptide reads, in one-letter code: tRNA uridine(34) hydroxylase (312 aa).

Residues 130-225 (RGDDVVFFDG…YGEKYGNDGL (96 aa)) enclose the Rhodanese domain. The Cysteine persulfide intermediate role is filled by Cys185.

This sequence belongs to the TrhO family.

The catalysed reaction is uridine(34) in tRNA + AH2 + O2 = 5-hydroxyuridine(34) in tRNA + A + H2O. Functionally, catalyzes oxygen-dependent 5-hydroxyuridine (ho5U) modification at position 34 in tRNAs. The sequence is that of tRNA uridine(34) hydroxylase from Corynebacterium diphtheriae (strain ATCC 700971 / NCTC 13129 / Biotype gravis).